Reading from the N-terminus, the 488-residue chain is Glutamyl-tRNA(Gln) amidotransferase subunit A (488 aa).

Residues lysine 77 and serine 152 each act as charge relay system in the active site. Serine 176 (acyl-ester intermediate) is an active-site residue.

The protein belongs to the amidase family. GatA subfamily. Heterotrimer of A, B and C subunits.

It catalyses the reaction L-glutamyl-tRNA(Gln) + L-glutamine + ATP + H2O = L-glutaminyl-tRNA(Gln) + L-glutamate + ADP + phosphate + H(+). Its function is as follows. Allows the formation of correctly charged Gln-tRNA(Gln) through the transamidation of misacylated Glu-tRNA(Gln) in organisms which lack glutaminyl-tRNA synthetase. The reaction takes place in the presence of glutamine and ATP through an activated gamma-phospho-Glu-tRNA(Gln). The sequence is that of Glutamyl-tRNA(Gln) amidotransferase subunit A from Streptococcus gordonii (strain Challis / ATCC 35105 / BCRC 15272 / CH1 / DL1 / V288).